The sequence spans 566 residues: Arginine--tRNA ligase (566 aa).

Positions Pro-123–His-133 match the 'HIGH' region motif.

This sequence belongs to the class-I aminoacyl-tRNA synthetase family. Monomer.

It is found in the cytoplasm. It catalyses the reaction tRNA(Arg) + L-arginine + ATP = L-arginyl-tRNA(Arg) + AMP + diphosphate. The polypeptide is Arginine--tRNA ligase (Alkaliphilus metalliredigens (strain QYMF)).